The chain runs to 261 residues: Synaptophysin-like protein 1 (261 aa).

Residues 1–33 (MASKANMVRQRFSRLSQRMSAFQINLNPLKEPL) lie on the Cytoplasmic side of the membrane. One can recognise an MARVEL domain in the interval 28–239 (PLKEPLGFIK…NAWFVYKETS (212 aa)). The chain crosses the membrane as a helical span at residues 34–54 (GFIKILEWFASIFAFATCGGF). Residues 55–117 (KGKTEIQVNC…LIGDYSSSAQ (63 aa)) are Vesicular-facing. 2 N-linked (GlcNAc...) asparagine glycosylation sites follow: Asn72 and Asn95. Residues 118–138 (FYVTFAVFVFLYCIAALLLYV) form a helical membrane-spanning segment. At 139 to 151 (GYTNLYRDSRKLP) the chain is on the cytoplasmic side. The chain crosses the membrane as a helical span at residues 152 to 172 (MIDFIVTLVATFLWLVSSSAW). The Vesicular segment spans residues 173 to 214 (AKALTDIKVATGHRIVEELEICNPESGVSCYFVSVTSMGSLN). Asn214 is a glycosylation site (N-linked (GlcNAc...) asparagine). Residues 215 to 235 (VSVIFGFLNMILWGGNAWFVY) form a helical membrane-spanning segment. Residues 236-261 (KETSLHSPSNTSASHSQGGGPPTSGM) are Cytoplasmic-facing. Residues 241 to 251 (HSPSNTSASHS) show a composition bias toward polar residues. The tract at residues 241 to 261 (HSPSNTSASHSQGGGPPTSGM) is disordered. Residues 252 to 261 (QGGGPPTSGM) are compositionally biased toward gly residues.

This sequence belongs to the synaptophysin/synaptobrevin family. As to expression, ubiquitously expressed.

It is found in the cytoplasmic vesicle membrane. The protein resides in the melanosome. The sequence is that of Synaptophysin-like protein 1 (Sypl1) from Mus musculus (Mouse).